The primary structure comprises 413 residues: NPL4-like protein 1 (413 aa).

S104 carries the post-translational modification Phosphoserine. Residues 131–272 (SVSFDRDCAN…ADVHFEPFQM (142 aa)) form the MPN domain.

The protein belongs to the NPL4 family.

The protein operates within protein degradation; proteasomal ubiquitin-dependent pathway. Functionally, may be part of a complex that binds ubiquitinated proteins and that is necessary for the export of misfolded proteins from the ER to the cytoplasm, where they are degraded by the proteasome. This is NPL4-like protein 1 from Arabidopsis thaliana (Mouse-ear cress).